Here is an 88-residue protein sequence, read N- to C-terminus: DASH complex subunit HSK3 (88 aa).

The span at 1–15 shows a compositional bias: low complexity; sequence MSSRGSGANAASRQS. The interval 1 to 24 is disordered; it reads MSSRGSGANAASRQSMTASGGAVK.

It belongs to the DASH complex HSK3 family. As to quaternary structure, component of the DASH complex consisting of ASK1, DAD1, DAD2, DAD3, DAD4, DAM1, DUO1, HSK3, SPC19 and SPC34, with a stoichiometry of one copy of each subunit per complex. Multiple DASH complexes oligomerize to form a ring that encircles spindle microtubules and organizes the rod-like NDC80 complexes of the outer kinetochore. DASH complex oligomerization strengthens microtubule attachments. On cytoplasmic microtubules, DASH complexes appear to form patches instead of rings.

It is found in the nucleus. The protein resides in the cytoplasm. Its subcellular location is the cytoskeleton. It localises to the spindle. The protein localises to the chromosome. It is found in the centromere. The protein resides in the kinetochore. Component of the DASH complex that connects microtubules with kinetochores and couples microtubule depolymerisation to chromosome movement; it is involved in retrieving kinetochores to the spindle poles before their re-orientation on the spindle in early mitosis and allows microtubule depolymerization to pull chromosomes apart and resist detachment during anaphase. Kinetochores, consisting of a centromere-associated inner segment and a microtubule-contacting outer segment, play a crucial role in chromosome segregation by mediating the physical connection between centromeric DNA and microtubules. Kinetochores also serve as an input point for the spindle assembly checkpoint, which delays anaphase until all chromosomes have bioriented on the mitotic spindle. In Chaetomium thermophilum (strain DSM 1495 / CBS 144.50 / IMI 039719) (Thermochaetoides thermophila), this protein is DASH complex subunit HSK3.